The chain runs to 200 residues: MKILAGLGNYEPKYLRNRHNVGFMALDIIAQAWNAGPWRKRFQGLASEVTIGSNKLLLLKPQTFYNNAGNSVGAAAAFYRVKPEDIIVFHDELDLAPGKFRMKMGGGAAGNNGIKSITSQLGPDFRRARIGIGHPGDRNRVTGYVLSDFAKAEEAWLIDLLDAIAGSLDLLAAGDYDAFQTKVTHKAPAPEVVKRGPDAD.

Y14 serves as a coordination point for tRNA. The active-site Proton acceptor is the H19. Residues F64, N66, and N112 each contribute to the tRNA site.

It belongs to the PTH family. In terms of assembly, monomer.

The protein resides in the cytoplasm. The catalysed reaction is an N-acyl-L-alpha-aminoacyl-tRNA + H2O = an N-acyl-L-amino acid + a tRNA + H(+). In terms of biological role, hydrolyzes ribosome-free peptidyl-tRNAs (with 1 or more amino acids incorporated), which drop off the ribosome during protein synthesis, or as a result of ribosome stalling. Functionally, catalyzes the release of premature peptidyl moieties from peptidyl-tRNA molecules trapped in stalled 50S ribosomal subunits, and thus maintains levels of free tRNAs and 50S ribosomes. This is Peptidyl-tRNA hydrolase from Maricaulis maris (strain MCS10) (Caulobacter maris).